We begin with the raw amino-acid sequence, 349 residues long: Putative F-box/LRR-repeat protein At3g16555 (349 aa).

In terms of domain architecture, F-box spans 1-48 (MVLLPWELEEDILSRLPPRSLVQFRSVCKRWNALFDVKSFNKDQFARA). An LRR repeat occupies 267–290 (VVWISLLTLPPNNLPNLFIVCYGI).

This is Putative F-box/LRR-repeat protein At3g16555 from Arabidopsis thaliana (Mouse-ear cress).